The chain runs to 424 residues: Protein shisa-9 (424 aa).

The first 23 residues, 1 to 23 (MRRVLRLLLGCFLTELCARMCRA), serve as a signal peptide directing secretion. Residues 24-149 (QERSGHGQLA…DPLHDPTKDK (126 aa)) lie on the Extracellular side of the membrane. 3 N-linked (GlcNAc...) asparagine glycosylation sites follow: N45, N89, and N116. Residues 150-170 (TNLIVYIICGVVAVMVLVGIF) traverse the membrane as a helical segment. The Cytoplasmic portion of the chain corresponds to 171–424 (TKLGLEKAHR…ITNSKTEVTV (254 aa)). Disordered stretches follow at residues 333–373 (PRAF…TWDP) and 389–424 (LGIAESGSCDPLGTRTQHFPPTQPYFITNSKTEVTV). 2 stretches are compositionally biased toward polar residues: residues 362–373 (YNSTANFKTWDP) and 402–424 (TRTQHFPPTQPYFITNSKTEVTV).

This sequence belongs to the shisa family. SHISA9 subfamily. In terms of assembly, component of some AMPA receptors (ionotropic glutamate receptors) complex, at least composed of some AMPA receptor (GRIA1, GRIA2 and/or GRIA3), CACNG2 and SHISA9, as well as low level of DLG4. As to expression, brain-specific. Mainly expressed in neurons, including in hippocampus, cerebral cortex, striatum, thalamus, olfactory bulb and cerebellum. Expressed in most brain structures during embryonic and postnatal development.

It localises to the cell projection. Its subcellular location is the dendritic spine membrane. It is found in the synapse. Regulator of short-term neuronal synaptic plasticity in the dentate gyrus. Associates with AMPA receptors (ionotropic glutamate receptors) in synaptic spines and promotes AMPA receptor desensitization at excitatory synapses. In Mus musculus (Mouse), this protein is Protein shisa-9 (Shisa9).